A 273-amino-acid chain; its full sequence is 2,3,4,5-tetrahydropyridine-2,6-dicarboxylate N-succinyltransferase (273 aa).

Substrate is bound by residues arginine 106 and aspartate 143.

The protein belongs to the transferase hexapeptide repeat family. As to quaternary structure, homotrimer.

Its subcellular location is the cytoplasm. The enzyme catalyses (S)-2,3,4,5-tetrahydrodipicolinate + succinyl-CoA + H2O = (S)-2-succinylamino-6-oxoheptanedioate + CoA. It participates in amino-acid biosynthesis; L-lysine biosynthesis via DAP pathway; LL-2,6-diaminopimelate from (S)-tetrahydrodipicolinate (succinylase route): step 1/3. The chain is 2,3,4,5-tetrahydropyridine-2,6-dicarboxylate N-succinyltransferase from Wolbachia sp. subsp. Brugia malayi (strain TRS).